The following is a 272-amino-acid chain: Alcohol dehydrogenase-related 31 kDa protein (272 aa).

11-34 serves as a coordination point for NAD(+); the sequence is YVADCGGIALETSKVLMTKNIAKL. A substrate-binding site is contributed by Ser-139. Catalysis depends on Tyr-152, which acts as the Proton acceptor.

This sequence belongs to the short-chain dehydrogenases/reductases (SDR) family.

In Drosophila teissieri (Fruit fly), this protein is Alcohol dehydrogenase-related 31 kDa protein (Adhr).